We begin with the raw amino-acid sequence, 360 residues long: Peptide chain release factor 1 (360 aa).

Q235 is modified (N5-methylglutamine). The segment covering 285–295 (RQAAEQTDMRR) has biased composition (basic and acidic residues). A disordered region spans residues 285–309 (RQAAEQTDMRRNLLGSGDRSDKIRT).

It belongs to the prokaryotic/mitochondrial release factor family. In terms of processing, methylated by PrmC. Methylation increases the termination efficiency of RF1.

The protein localises to the cytoplasm. Peptide chain release factor 1 directs the termination of translation in response to the peptide chain termination codons UAG and UAA. In Haemophilus influenzae (strain ATCC 51907 / DSM 11121 / KW20 / Rd), this protein is Peptide chain release factor 1 (prfA).